The following is a 215-amino-acid chain: Small ribosomal subunit protein uS5 (215 aa).

Residues 1–62 (MTDSSPQSNP…QERDSEWQER (62 aa)) form a disordered region. Low complexity predominate over residues 9–28 (NPNAVPGAADVPAAAEGQQQ). Residues 29-61 (EQRRGGGRGERGDRRGGRRGDRRNQERDSEWQE) are compositionally biased toward basic and acidic residues. In terms of domain architecture, S5 DRBM spans 59–122 (WQERVVQIRR…ADGKKHLVKV (64 aa)).

The protein belongs to the universal ribosomal protein uS5 family. As to quaternary structure, part of the 30S ribosomal subunit. Contacts proteins S4 and S8.

Functionally, with S4 and S12 plays an important role in translational accuracy. Located at the back of the 30S subunit body where it stabilizes the conformation of the head with respect to the body. The polypeptide is Small ribosomal subunit protein uS5 (Parasynechococcus marenigrum (strain WH8102)).